A 538-amino-acid chain; its full sequence is Phosphoenolpyruvate carboxykinase (ATP) (538 aa).

Residues Arg-64, Tyr-205, and Lys-211 each coordinate substrate. Residues Lys-211, His-230, and 246–254 (GLSGTGKTT) each bind ATP. Mn(2+)-binding residues include Lys-211 and His-230. Mn(2+) is bound at residue Asp-267. Residues Glu-295, Arg-331, 447-448 (RI), and Thr-453 each bind ATP. Arg-331 lines the substrate pocket.

Belongs to the phosphoenolpyruvate carboxykinase (ATP) family. In terms of assembly, monomer. It depends on Mn(2+) as a cofactor.

The protein resides in the cytoplasm. It catalyses the reaction oxaloacetate + ATP = phosphoenolpyruvate + ADP + CO2. The protein operates within carbohydrate biosynthesis; gluconeogenesis. Involved in the gluconeogenesis. Catalyzes the conversion of oxaloacetate (OAA) to phosphoenolpyruvate (PEP) through direct phosphoryl transfer between the nucleoside triphosphate and OAA. This Histophilus somni (strain 129Pt) (Haemophilus somnus) protein is Phosphoenolpyruvate carboxykinase (ATP).